The sequence spans 437 residues: tRNA modification GTPase MnmE (437 aa).

(6S)-5-formyl-5,6,7,8-tetrahydrofolate-binding residues include R21, E79, and R119. Positions 223–364 (GFRVVLAGPP…FRSALIAHAR (142 aa)) constitute a TrmE-type G domain. GTP is bound by residues 233–238 (NAGKST), 252–258 (AAEPGTT), and 277–280 (DTAG). Residues S237 and T258 each contribute to the Mg(2+) site. Position 437 (K437) interacts with (6S)-5-formyl-5,6,7,8-tetrahydrofolate.

It belongs to the TRAFAC class TrmE-Era-EngA-EngB-Septin-like GTPase superfamily. TrmE GTPase family. Homodimer. Heterotetramer of two MnmE and two MnmG subunits. It depends on K(+) as a cofactor.

The protein resides in the cytoplasm. In terms of biological role, exhibits a very high intrinsic GTPase hydrolysis rate. Involved in the addition of a carboxymethylaminomethyl (cmnm) group at the wobble position (U34) of certain tRNAs, forming tRNA-cmnm(5)s(2)U34. This is tRNA modification GTPase MnmE from Novosphingobium aromaticivorans (strain ATCC 700278 / DSM 12444 / CCUG 56034 / CIP 105152 / NBRC 16084 / F199).